The sequence spans 325 residues: 2-oxoglutarate-dependent dioxygenase tropC (325 aa).

The Fe2OG dioxygenase domain occupies 185–287 (PSIPMRLLHY…RYSVAFFLNG (103 aa)). Fe cation contacts are provided by H210, D212, and H269. A 2-oxoglutarate-binding site is contributed by R278.

This sequence belongs to the iron/ascorbate-dependent oxidoreductase family. It depends on Fe(2+) as a cofactor.

Its pathway is secondary metabolite biosynthesis. In terms of biological role, 2-oxoglutarate-dependent dioxygenase; part of the gene cluster that mediates the biosynthesis of the tropolone class of fungal maleic anhydrides. The pathway begins with the synthesis of 3-methylorcinaldehyde by the non-reducing polyketide synthase (PKS) tropA. 3-methylorcinaldehyde is the substrate for the FAD-dependent monooxygenase tropB to yield a dearomatized hydroxycyclohexadione. The 2-oxoglutarate-dependent dioxygenase tropC then performs the oxidative ring expansion to provide the first tropolone metabolite stipitaldehyde. Trop D converts stipitaldehyde into stipitacetal which is in turn converted to stipitalide by the short-chain dehydrogenase/reductase tropE. The next steps involve tropF, tropG, tropH, tropI and tropJ to form successive tropolone maleic anhydrides including stipitaldehydic, stipitatonic and stipitatic acids. The chain is 2-oxoglutarate-dependent dioxygenase tropC from Talaromyces stipitatus (strain ATCC 10500 / CBS 375.48 / QM 6759 / NRRL 1006) (Penicillium stipitatum).